Here is a 252-residue protein sequence, read N- to C-terminus: DNA repair protein RecO (252 aa).

It belongs to the RecO family.

In terms of biological role, involved in DNA repair and RecF pathway recombination. The sequence is that of DNA repair protein RecO from Rhodospirillum rubrum (strain ATCC 11170 / ATH 1.1.1 / DSM 467 / LMG 4362 / NCIMB 8255 / S1).